The following is a 93-amino-acid chain: Large ribosomal subunit protein uL23cz/uL23cy (93 aa).

The protein belongs to the universal ribosomal protein uL23 family. As to quaternary structure, part of the 50S ribosomal subunit.

It is found in the plastid. It localises to the chloroplast. Functionally, binds to 23S rRNA. The protein is Large ribosomal subunit protein uL23cz/uL23cy (rpl23-A) of Nymphaea alba (White water-lily).